The following is a 65-amino-acid chain: Photosystem II reaction center protein H (65 aa).

A helical transmembrane segment spans residues 27–47; that stretch reads GAVPVMAFIGVLLLVFLVIML.

Belongs to the PsbH family. As to quaternary structure, PSII is composed of 1 copy each of membrane proteins PsbA, PsbB, PsbC, PsbD, PsbE, PsbF, PsbH, PsbI, PsbJ, PsbK, PsbL, PsbM, PsbT, PsbX, PsbY, Psb30/Ycf12, peripheral proteins PsbO, CyanoQ (PsbQ), PsbU, PsbV and a large number of cofactors. It forms dimeric complexes.

Its subcellular location is the cellular thylakoid membrane. Functionally, one of the components of the core complex of photosystem II (PSII), required for its stability and/or assembly. PSII is a light-driven water:plastoquinone oxidoreductase that uses light energy to abstract electrons from H(2)O, generating O(2) and a proton gradient subsequently used for ATP formation. It consists of a core antenna complex that captures photons, and an electron transfer chain that converts photonic excitation into a charge separation. This is Photosystem II reaction center protein H from Prochlorococcus marinus (strain NATL1A).